The sequence spans 85 residues: Conotoxin Im28.1 (85 aa).

The N-terminal stretch at Met-1 to Ala-21 is a signal peptide. Residues Val-22 to Lys-40 constitute a propeptide that is removed on maturation.

The protein belongs to the conotoxin D superfamily. Contains 5 disulfide bonds. As to expression, expressed by the venom duct.

It localises to the secreted. Functionally, probable neurotoxin. The chain is Conotoxin Im28.1 from Conus imperialis (Imperial cone).